Consider the following 145-residue polypeptide: Protein cornichon homolog 1 (145 aa).

A run of 3 helical transmembrane segments spans residues 5–25 (FAAFCYLLALIAVGFCIFFAI), 57–77 (IIHGTFTVLFIFSWQLISILA), and 116–136 (LRISWIKLAFYLVSFFYYLYA).

The protein belongs to the cornichon family. As to quaternary structure, interacts with glr-1. As to expression, widely expressed in the nervous system including in the AVA interneurons.

It is found in the endoplasmic reticulum membrane. It localises to the synapse. The protein resides in the cell projection. The protein localises to the dendrite. Negatively regulates export of glr-1 from the endoplasmic reticulum to synapses. The sequence is that of Protein cornichon homolog 1 from Caenorhabditis elegans.